Consider the following 272-residue polypeptide: Imidazole glycerol phosphate synthase subunit HisF (272 aa).

Residues Asp-11 and Asp-130 contribute to the active site.

This sequence belongs to the HisA/HisF family. Heterodimer of HisH and HisF.

The protein localises to the cytoplasm. It catalyses the reaction 5-[(5-phospho-1-deoxy-D-ribulos-1-ylimino)methylamino]-1-(5-phospho-beta-D-ribosyl)imidazole-4-carboxamide + L-glutamine = D-erythro-1-(imidazol-4-yl)glycerol 3-phosphate + 5-amino-1-(5-phospho-beta-D-ribosyl)imidazole-4-carboxamide + L-glutamate + H(+). The protein operates within amino-acid biosynthesis; L-histidine biosynthesis; L-histidine from 5-phospho-alpha-D-ribose 1-diphosphate: step 5/9. Its function is as follows. IGPS catalyzes the conversion of PRFAR and glutamine to IGP, AICAR and glutamate. The HisF subunit catalyzes the cyclization activity that produces IGP and AICAR from PRFAR using the ammonia provided by the HisH subunit. The protein is Imidazole glycerol phosphate synthase subunit HisF of Methanococcus vannielii (strain ATCC 35089 / DSM 1224 / JCM 13029 / OCM 148 / SB).